A 160-amino-acid chain; its full sequence is SsrA-binding protein (160 aa).

This sequence belongs to the SmpB family.

The protein localises to the cytoplasm. Functionally, required for rescue of stalled ribosomes mediated by trans-translation. Binds to transfer-messenger RNA (tmRNA), required for stable association of tmRNA with ribosomes. tmRNA and SmpB together mimic tRNA shape, replacing the anticodon stem-loop with SmpB. tmRNA is encoded by the ssrA gene; the 2 termini fold to resemble tRNA(Ala) and it encodes a 'tag peptide', a short internal open reading frame. During trans-translation Ala-aminoacylated tmRNA acts like a tRNA, entering the A-site of stalled ribosomes, displacing the stalled mRNA. The ribosome then switches to translate the ORF on the tmRNA; the nascent peptide is terminated with the 'tag peptide' encoded by the tmRNA and targeted for degradation. The ribosome is freed to recommence translation, which seems to be the essential function of trans-translation. This Mycobacterium leprae (strain Br4923) protein is SsrA-binding protein.